The following is a 392-amino-acid chain: Norsolorinic acid reductase B (392 aa).

Asp75 is a binding site for NADP(+). Residue Tyr80 is the Proton donor of the active site. Residues 184–185 (SD), Gln210, 239–249 (GTLGQGSFQTE), and 311–319 (RKLEHIQGN) contribute to the NADP(+) site. The segment at 242–263 (GQGSFQTEEGRKQREKDNPGRK) is disordered. A compositionally biased stretch (basic and acidic residues) spans 249–261 (EEGRKQREKDNPG).

The protein belongs to the aldo/keto reductase family. Aldo/keto reductase 2 subfamily.

It functions in the pathway mycotoxin biosynthesis. Its function is as follows. Norsolorinic acid reductase; part of the fragmented gene cluster that mediates the biosynthesis of dothistromin (DOTH), a polyketide toxin very similar in structure to the aflatoxin precursor, versicolorin B. The first step of the pathway is the conversion of acetate to norsolorinic acid (NOR) and requires the fatty acid synthase subunits hexA and hexB, as well as the polyketide synthase pksA. PksA combines a hexanoyl starter unit and 7 malonyl-CoA extender units to synthesize the precursor NOR. The hexanoyl starter unit is provided to the acyl-carrier protein (ACP) domain by the fungal fatty acid synthase hexA/hexB. The second step is the conversion of NOR to averantin (AVN) and requires the norsolorinic acid ketoreductase nor1, which catalyzes the dehydration of norsolorinic acid to form (1'S)-averantin. The cytochrome P450 monooxygenase avnA then catalyzes the hydroxylation of AVN to 5'hydroxyaverantin (HAVN). The next step is performed by adhA that transforms HAVN to averufin (AVF). Averufin might then be converted to hydroxyversicolorone by cypX and avfA. Hydroxyversicolorone is further converted versiconal hemiacetal acetate (VHA) by moxY. VHA is then the substrate for the versiconal hemiacetal acetate esterase est1 to yield versiconal (VAL). Versicolorin B synthase vbsA then converts VAL to versicolorin B (VERB) by closing the bisfuran ring. Then, the activity of the versicolorin B desaturase verB leads to versicolorin A (VERA). DotB, a predicted chloroperoxidase, may perform epoxidation of the A-ring of VERA. Alternatively, a cytochrome P450, such as cypX or avnA could catalyze this step. It is also possible that another, uncharacterized, cytochrome P450 enzyme is responsible for this step. Opening of the epoxide could potentially be achieved by the epoxide hydrolase epoA. However, epoA seems not to be required for DOTH biosynthesis, but other epoxide hydrolases may have the ability to complement this hydrolysis. Alternatively, opening of the epoxide ring could be achieved non-enzymatically. The next step is the deoxygenation of ring A to yield the 5,8-dihydroxyanthraquinone which is most likely catalyzed by the NADPH dehydrogenase encoded by ver1. The last stages of DOTH biosynthesis are proposed to involve hydroxylation of the bisfuran. OrdB and norB might have oxidative roles here. An alternative possibility is that cytochrome P450 monoogenases such as avnA and cypX might perform these steps in addition to previously proposed steps. The polypeptide is Norsolorinic acid reductase B (Dothistroma septosporum (strain NZE10 / CBS 128990) (Red band needle blight fungus)).